Reading from the N-terminus, the 202-residue chain is Dephospho-CoA kinase (202 aa).

The 198-residue stretch at 5–202 (IVGLTGGIAS…DADYRARANP (198 aa)) folds into the DPCK domain. 13–18 (ASGKSA) provides a ligand contact to ATP.

The protein belongs to the CoaE family.

It localises to the cytoplasm. The catalysed reaction is 3'-dephospho-CoA + ATP = ADP + CoA + H(+). It functions in the pathway cofactor biosynthesis; coenzyme A biosynthesis; CoA from (R)-pantothenate: step 5/5. In terms of biological role, catalyzes the phosphorylation of the 3'-hydroxyl group of dephosphocoenzyme A to form coenzyme A. The protein is Dephospho-CoA kinase of Xanthomonas axonopodis pv. citri (strain 306).